The sequence spans 309 residues: Thioredoxin reductase (309 aa).

35-42 (EKQFPGGK) contributes to the FAD binding site. Cys134 and Cys137 are joined by a disulfide. 277–286 (DIVDKNVRQI) serves as a coordination point for FAD.

It belongs to the class-II pyridine nucleotide-disulfide oxidoreductase family. In terms of assembly, homodimer. Requires FAD as cofactor.

The protein resides in the cytoplasm. The enzyme catalyses [thioredoxin]-dithiol + NADP(+) = [thioredoxin]-disulfide + NADPH + H(+). The polypeptide is Thioredoxin reductase (trxB) (Ureaplasma parvum serovar 3 (strain ATCC 700970)).